The chain runs to 229 residues: Protein FAM3C (229 aa).

The first 24 residues, 1–24 (MRIAGAIKFVVAVALFLLTFYVIS), serve as a signal peptide directing secretion. 2 cysteine pairs are disulfide-bonded: Cys-59-Cys-87 and Cys-65-Cys-222. Positions 68–226 (KHFAFKIASG…VEMEGCIPQK (159 aa)) constitute a GG-type lectin domain.

This sequence belongs to the FAM3 family. Expressed in the retinal ganglion cell layer.

The protein localises to the secreted. Involved in retinal laminar formation. This chain is Protein FAM3C (fam3c), found in Xenopus laevis (African clawed frog).